Here is a 463-residue protein sequence, read N- to C-terminus: Probable mannan endo-1,4-beta-mannosidase F (463 aa).

The first 18 residues, 1 to 18, serve as a signal peptide directing secretion; sequence MRSLSSIALLSVVGAASA. The CBM1 domain maps to 19–54; sequence QAGPWAQCGGKSFSGSSECASGWKCQELNEWFSQCV. A disordered region spans residues 57-78; it reads AESTTPTVSSTPTPTDAPSVSI. Residues 59–77 show a composition bias toward low complexity; sequence STTPTVSSTPTPTDAPSVS. The interval 75 to 118 is ser-rich linker; the sequence is SVSITASVTTGINKSISVSSASKSTPLPSSSSASPSPRPTGSGS. The N-linked (GlcNAc...) asparagine glycan is linked to asparagine 87. Residues 93–118 are compositionally biased toward low complexity; sequence SSASKSTPLPSSSSASPSPRPTGSGS. The tract at residues 93-121 is disordered; it reads SSASKSTPLPSSSSASPSPRPTGSGSFAK. Residues 119–463 are catalytic; the sequence is FAKADGLQFS…MDHMENVNKN (345 aa). Positions 171 and 285 each coordinate substrate. Residue glutamate 286 is the Proton donor/acceptor of the active site. A substrate-binding site is contributed by tyrosine 361. Glutamate 395 serves as the catalytic Nucleophile. Tryptophan 424 provides a ligand contact to substrate.

It belongs to the glycosyl hydrolase 5 (cellulase A) family.

It is found in the secreted. It carries out the reaction Random hydrolysis of (1-&gt;4)-beta-D-mannosidic linkages in mannans, galactomannans and glucomannans.. Endo-1,4-mannanase, a crucial enzyme for depolymerization of seed galactomannans and wood galactoglucomannans. The chain is Probable mannan endo-1,4-beta-mannosidase F (manF) from Aspergillus oryzae (strain ATCC 42149 / RIB 40) (Yellow koji mold).